The primary structure comprises 496 residues: Cytochrome P450 71D180 (496 aa).

The helical; Signal-anchor for type II membrane protein transmembrane segment at 1-21 (MDISISWVVIIVFVLSYLILM) threads the bilayer. Cysteine 435 is a heme binding site.

Belongs to the cytochrome P450 family. The cofactor is heme. Mostly expressed in flowers and, to a lower extent, in leaves, especially in glandular trichomes.

It localises to the membrane. The catalysed reaction is (4R)-limonene + reduced [NADPH--hemoprotein reductase] + O2 = (1R,5S)-carveol + oxidized [NADPH--hemoprotein reductase] + H2O + H(+). It catalyses the reaction (4S)-limonene + reduced [NADPH--hemoprotein reductase] + O2 = (1S,5R)-carveol + oxidized [NADPH--hemoprotein reductase] + H2O + H(+). It carries out the reaction gamma-terpinene + 2 reduced [NADPH--hemoprotein reductase] + 2 O2 = carvacrol + 2 oxidized [NADPH--hemoprotein reductase] + 3 H2O + 2 H(+). Its pathway is secondary metabolite biosynthesis; terpenoid biosynthesis. Involved in the biosynthesis of phenolic monoterpenes natural products thymol and carvacrol which have a broad range of biological activities acting as antimicrobial compounds, insecticides, antioxidants and pharmaceutical agents. Catalyzes the C2-hydroxylation of gamma-terpinene to produce carvacrol. Mediates also the C6-hydroxylation of (4S)-limonene and (4R)-limonene to form carveol. This is Cytochrome P450 71D180 from Thymus vulgaris (Thyme).